Reading from the N-terminus, the 287-residue chain is ADP-dependent (S)-NAD(P)H-hydrate dehydratase (287 aa).

The YjeF C-terminal domain occupies 7 to 283 (GEDDVRKFVP…ELLPSVMKPF (277 aa)). (6S)-NADPHX contacts are provided by Ala-42 and His-159. Residues 196–200 (KGPTD) and Gly-224 each bind AMP. Residue Asp-225 coordinates (6S)-NADPHX.

It belongs to the NnrD/CARKD family. As to quaternary structure, homotetramer. Mg(2+) serves as cofactor.

It catalyses the reaction (6S)-NADHX + ADP = AMP + phosphate + NADH + H(+). The catalysed reaction is (6S)-NADPHX + ADP = AMP + phosphate + NADPH + H(+). Its function is as follows. Catalyzes the dehydration of the S-form of NAD(P)HX at the expense of ADP, which is converted to AMP. Together with NAD(P)HX epimerase, which catalyzes the epimerization of the S- and R-forms, the enzyme allows the repair of both epimers of NAD(P)HX, a damaged form of NAD(P)H that is a result of enzymatic or heat-dependent hydration. This chain is ADP-dependent (S)-NAD(P)H-hydrate dehydratase, found in Cenarchaeum symbiosum (strain A).